Here is a 62-residue protein sequence, read N- to C-terminus: Large ribosomal subunit protein uL29 (62 aa).

Belongs to the universal ribosomal protein uL29 family.

The polypeptide is Large ribosomal subunit protein uL29 (Geobacter sp. (strain M21)).